The chain runs to 175 residues: MDLKRDWLRWKITIGSGPGSIVLDFPSFLVGCVFTTMMGPILQKLIGKLLVGLITVCKFLVIIGSIVFVIGVASKKYTYDDFKVSIKRSGEPGESHDMRTEPKRTAKTATVPMEKDEGVGSYNYFEIPITKETSTIPYINCDGTSSLRKPPNGPSSVGLSNSNRYENFINMARHK.

A run of 2 helical transmembrane segments spans residues 21–41 and 50–70; these read IVLDFPSFLVGCVFTTMMGPI and LVGLITVCKFLVIIGSIVFVI.

It localises to the membrane. This is an uncharacterized protein from Saccharomyces cerevisiae (strain ATCC 204508 / S288c) (Baker's yeast).